Reading from the N-terminus, the 197-residue chain is Probable thymidylate kinase (197 aa).

7–14 (GLDGSGKT) lines the ATP pocket.

This sequence belongs to the thymidylate kinase family.

It catalyses the reaction dTMP + ATP = dTDP + ADP. This chain is Probable thymidylate kinase, found in Halorubrum lacusprofundi (strain ATCC 49239 / DSM 5036 / JCM 8891 / ACAM 34).